A 279-amino-acid chain; its full sequence is Replication protein A 32 kDa subunit A (279 aa).

A disordered region spans residues 1-39 (MMSFSQPDAFSPSQFTSSQNAAADSTTPSKSRGASSTMP). A DNA-binding region (OB) is located at residues 71–145 (VRLVGLVSGK…RATAFAIRPV (75 aa)). The disordered stretch occupies residues 181–210 (GSSSSNGFSEMTTPTSVKSNPAPVLSVTNG). Over residues 190-199 (EMTTPTSVKS) the composition is skewed to polar residues.

Belongs to the replication factor A protein 2 family. In terms of assembly, heterotrimer of RPA1, RPA2 and RPA3 (canonical replication protein A complex). Interacts with RPA1A, RPA1B and RPA3. In terms of processing, phosphorylated in a cell-cycle-dependent manner (from the S phase until mitosis). In response to DNA damage, recruited to DNA-repair nuclear foci, as a hypophosphorylated form. Expressed in root tips, roots, shoot apical meristem (SAM), young leaves, flag leaves and ears, and at lower levels in mature leaves.

It localises to the nucleus. In terms of biological role, component of the replication protein A complex (RPA) required for DNA recombination, repair and replication. The activity of RPA is mediated by single-stranded DNA binding and protein interactions. This is Replication protein A 32 kDa subunit A (RPA2A) from Oryza sativa subsp. japonica (Rice).